The sequence spans 224 residues: DeSI-like protein At4g17486 (224 aa).

Positions 26 to 163 constitute a PPPDE domain; that stretch reads TPVYLNVYDL…FCNCLLPESI (138 aa). Catalysis depends on residues His51 and Cys125. Positions 176–201 are disordered; it reads EFSDEDESNSEASSVSDEEGSEQHLI.

The protein belongs to the DeSI family.

This Arabidopsis thaliana (Mouse-ear cress) protein is DeSI-like protein At4g17486.